A 249-amino-acid chain; its full sequence is MSSLHEHLRPIPEPFSLTLLLGTRETPVTFLFHYYLYHALKAKESTCFLTFSKTLDEHAISMRKWGMDIKTKKNFFFIDGFSMLFAPISKPSKVQAPETKNHIKSVFAPVIQCVEENDFEFENSTIIIEDIDILQSTHALDSTKIQQAILELRKCFSRVIVNVTLGAPLPQQKSLGSSIGHMATRCISCRPLTSGSARRITGFLRLSRMPNHFRSGICETPEDDDKELLYEVTEAGAKVYSKGQVTLQL.

The protein belongs to the ELP6 family. In terms of assembly, component of the elongator complex.

It is found in the cytoplasm. It localises to the nucleus. It functions in the pathway tRNA modification; 5-methoxycarbonylmethyl-2-thiouridine-tRNA biosynthesis. Component of the elongator complex which is required for multiple tRNA modifications, including mcm5U (5-methoxycarbonylmethyl uridine), mcm5s2U (5-methoxycarbonylmethyl-2-thiouridine), and ncm5U (5-carbamoylmethyl uridine). The elongator complex catalyzes formation of carboxymethyluridine in the wobble base at position 34 in tRNAs. This is Elongator complex protein 6 homolog from Schizosaccharomyces pombe (strain 972 / ATCC 24843) (Fission yeast).